The primary structure comprises 519 residues: MINDIRRINITTSSIESLNENSKYLKRNHKRTIKICAYAITTFALFFIVVVYFKNQTNVNDANRNTLAAIDETSLMNKEIAYLREILKKYKTKTNENNEYAYEKNDDINGDGEDEHELLLMLHKFLKNKGNPNKIDRFDINNNDSNKNRGNENIDQINILSQKLESMHDNIKYASKFFKYMKEYNKKYKNIDEQLVRFENFKTNYMKVKKHNEMVGKNGITYVQKVNQFSDFSKEELDSYFKKLLPIPHNLKTKHVVPLKTHLDDNKIKPKEGVLDYPEQRDYREWNILLPPKDQGMCGSCWAFASVGNYEALFAKKYSILPISFSEQQVVDCSSDNFGCDGGHPFLSFLYFLNNGVCFGDNYEYKAHDDFFCLSYRCAYRSKLKKIGNAYPYELIMSLNEVGPITVNVGVSDEFVLYSGGIFDGTCASELNHSVLLVGYGKVKRSLVFEDSHTNVDSNLIKNYKENIKDSDDDYLYYWIIRNSWSSTWGEGGYIRIKRNKLGDDVFCGIGIDVFFPIL.

Topologically, residues 1 to 32 (MINDIRRINITTSSIESLNENSKYLKRNHKRT) are cytoplasmic. Residues 33–53 (IKICAYAITTFALFFIVVVYF) form a helical; Signal-anchor for type II membrane protein membrane-spanning segment. Residues 54–519 (KNQTNVNDAN…IGIDVFFPIL (466 aa)) are Lumenal-facing. N-linked (GlcNAc...) asparagine glycosylation is found at Asn55 and Asn143. Disulfide bonds link Cys298-Cys340, Cys333-Cys373, Cys358-Cys378, and Cys427-Cys508. Residue Cys301 is part of the active site. A glycan (N-linked (GlcNAc...) asparagine) is linked at Asn432. Catalysis depends on residues His433 and Asn483.

Belongs to the peptidase C1 family.

It is found in the membrane. Its function is as follows. Cysteine protease. Required for host hepatocyte-derived merozoite infectivity and to a lesser extent for host erythrocyte-derived merozoite infectivity. This chain is Berghepain-1, found in Plasmodium berghei (strain Anka).